The sequence spans 426 residues: MTYFIDRRANAKNKSAVNRQRFLQRYRSHIKRAVEEAVNRRSITDMERGEKISIPAKDISEPVFQHGPGGARTIVSPGNKEFVEGDRLRRPGGEGRGGSGEGSASNQGEGMDEFAFSLSREEFLDFVFDGLALPHLERKQLRDLDEVRPVRAGVTRDGVPSRINIVRSMREAQARRIGMRAPIKRALREAEEALESEERKDPVLRNPARIGELKAEIERLEKRLEAVPFIDTYDLRYNNLIDQPQPSNKAVMFCVMDVSGSMTQGHKDIAKRFFLLLYLFLERNYEKVELVFIRHHTAAKEVDEEEFFYSRETGGTIVSSALTLVDEIIAKRYSPAQWNLYVAQASDGDNWDDDSLTCRDLLMTSLMAKLQYYTYVEITPHSHQALWEEYERVQAAHPSRFAMQQIVEPGDIYPVFRKLFRKRVAS.

Residues 82–93 (FVEGDRLRRPGG) show a composition bias toward basic and acidic residues. The disordered stretch occupies residues 82-109 (FVEGDRLRRPGGEGRGGSGEGSASNQGE).

It belongs to the UPF0229 family.

In Chromohalobacter salexigens (strain ATCC BAA-138 / DSM 3043 / CIP 106854 / NCIMB 13768 / 1H11), this protein is UPF0229 protein Csal_0882.